Consider the following 126-residue polypeptide: Small ribosomal subunit protein uS13 (126 aa).

The tract at residues 96–126 (LPVRGQQTKTNARTRKGRRKGTVANKKKVSK) is disordered. Basic residues predominate over residues 107-126 (ARTRKGRRKGTVANKKKVSK).

The protein belongs to the universal ribosomal protein uS13 family. As to quaternary structure, part of the 30S ribosomal subunit. Forms a loose heterodimer with protein S19. Forms two bridges to the 50S subunit in the 70S ribosome.

Located at the top of the head of the 30S subunit, it contacts several helices of the 16S rRNA. In the 70S ribosome it contacts the 23S rRNA (bridge B1a) and protein L5 of the 50S subunit (bridge B1b), connecting the 2 subunits; these bridges are implicated in subunit movement. Contacts the tRNAs in the A and P-sites. This chain is Small ribosomal subunit protein uS13, found in Hydrogenobaculum sp. (strain Y04AAS1).